We begin with the raw amino-acid sequence, 328 residues long: Phosphoserine phosphatase (328 aa).

The Nucleophile role is filled by Asp113. The Mg(2+) site is built by Asp113 and Asp115. Residue Asp115 is the Proton donor of the active site. Substrate contacts are provided by residues Glu122, Arg158, 201 to 202 (SG), and Lys246. Asp269 contacts Mg(2+). A substrate-binding site is contributed by Asn272.

This sequence belongs to the HAD-like hydrolase superfamily. SerB family. Requires Mg(2+) as cofactor.

The enzyme catalyses O-phospho-L-serine + H2O = L-serine + phosphate. It catalyses the reaction O-phospho-D-serine + H2O = D-serine + phosphate. It participates in amino-acid biosynthesis; L-serine biosynthesis; L-serine from 3-phospho-D-glycerate: step 3/3. The chain is Phosphoserine phosphatase from Vibrio cholerae serotype O1 (strain ATCC 39315 / El Tor Inaba N16961).